Here is a 428-residue protein sequence, read N- to C-terminus: GTPase Obg (428 aa).

Positions 1 to 158 (MFVDQVKIYV…RDVILELKVL (158 aa)) constitute an Obg domain. Residues 159 to 329 (ADVGLVGFPS…LLFEVANLLE (171 aa)) form the OBG-type G domain. GTP is bound by residues 165 to 172 (GFPSVGKS), 190 to 194 (FTTIV), 212 to 215 (DLPG), 282 to 285 (NKMD), and 310 to 312 (SAV). 2 residues coordinate Mg(2+): S172 and T192. Residues 350 to 428 (KLETEGVKFD…ILEYEFEFID (79 aa)) form the OCT domain.

It belongs to the TRAFAC class OBG-HflX-like GTPase superfamily. OBG GTPase family. Monomer. Requires Mg(2+) as cofactor.

It localises to the cytoplasm. Functionally, an essential GTPase which binds GTP, GDP and possibly (p)ppGpp with moderate affinity, with high nucleotide exchange rates and a fairly low GTP hydrolysis rate. Plays a role in control of the cell cycle, stress response, ribosome biogenesis and in those bacteria that undergo differentiation, in morphogenesis control. This Bacillus cereus (strain Q1) protein is GTPase Obg.